The sequence spans 37 residues: Disintegrin morulustatin (37 aa).

3 disulfide bridges follow: C12–C16, C22–C36, and C24–C31.

This sequence belongs to the venom metalloproteinase (M12B) family. P-II subfamily. P-IIa sub-subfamily. Expressed by the venom gland.

It localises to the secreted. In terms of biological role, inhibits ADP-induced platelet aggregation in human whole blood in a concentration-dependent manner (IC(50)=89.5 nM). In Crotalus morulus (Tamaulipan rock rattlesnake), this protein is Disintegrin morulustatin.